The primary structure comprises 406 residues: RNA exonuclease 4 (406 aa).

The segment covering 1–10 has biased composition (polar residues); the sequence is MAPELSSNWK. Disordered regions lie at residues 1 to 108 and 156 to 181; these read MAPE…TLPS and AGLT…PTDL. 3 stretches are compositionally biased toward low complexity: residues 54–64, 72–82, and 94–108; these read SQQQQQASNPS, SQTQSQPSSQK, and SKPT…TLPS. The span at 162 to 173 shows a compositional bias: polar residues; sequence GHSSSSPKSNKN. The Exonuclease domain occupies 216–367; sequence YLSIDCEMVG…EDARVAMLLF (152 aa). Over residues 377-387 the composition is skewed to basic and acidic residues; sequence ENSNRYEEGQA. The segment at 377–406 is disordered; the sequence is ENSNRYEEGQAKKGGNGGGGGGGKKKKGKK. Residues 388–398 are compositionally biased toward gly residues; it reads KKGGNGGGGGG.

Belongs to the REXO4 family.

The protein resides in the nucleus. Exoribonuclease involved in ribosome biosynthesis. Involved in the processing of ITS1, the internal transcribed spacer localized between the 18S and 5.8S rRNAs. This Neurospora crassa (strain ATCC 24698 / 74-OR23-1A / CBS 708.71 / DSM 1257 / FGSC 987) protein is RNA exonuclease 4 (rex-4).